The sequence spans 247 residues: 3-deoxy-manno-octulosonate cytidylyltransferase (247 aa).

The protein belongs to the KdsB family.

The protein resides in the cytoplasm. The catalysed reaction is 3-deoxy-alpha-D-manno-oct-2-ulosonate + CTP = CMP-3-deoxy-beta-D-manno-octulosonate + diphosphate. It functions in the pathway nucleotide-sugar biosynthesis; CMP-3-deoxy-D-manno-octulosonate biosynthesis; CMP-3-deoxy-D-manno-octulosonate from 3-deoxy-D-manno-octulosonate and CTP: step 1/1. It participates in bacterial outer membrane biogenesis; lipopolysaccharide biosynthesis. Activates KDO (a required 8-carbon sugar) for incorporation into bacterial lipopolysaccharide in Gram-negative bacteria. In Methylorubrum extorquens (strain PA1) (Methylobacterium extorquens), this protein is 3-deoxy-manno-octulosonate cytidylyltransferase.